The following is an 876-amino-acid chain: Leucine--tRNA ligase (876 aa).

The 'HIGH' region motif lies at 43-53; it reads PYPSGRIHMGH. Positions 632–636 match the 'KMSKS' region motif; sequence KMSKS. K635 lines the ATP pocket.

The protein belongs to the class-I aminoacyl-tRNA synthetase family.

The protein localises to the cytoplasm. It catalyses the reaction tRNA(Leu) + L-leucine + ATP = L-leucyl-tRNA(Leu) + AMP + diphosphate. This chain is Leucine--tRNA ligase, found in Rhizobium etli (strain ATCC 51251 / DSM 11541 / JCM 21823 / NBRC 15573 / CFN 42).